A 92-amino-acid polypeptide reads, in one-letter code: DNA/RNA-binding protein Alba (92 aa).

Lys11 carries the post-translational modification N6-acetyllysine.

This sequence belongs to the histone-like Alba family. Post-translationally, acetylated. Acetylation at Lys-11 decreases DNA-binding affinity.

The protein resides in the cytoplasm. It is found in the chromosome. Binds double-stranded DNA tightly but without sequence specificity. Involved in DNA compaction. The chain is DNA/RNA-binding protein Alba from Pyrobaculum islandicum (strain DSM 4184 / JCM 9189 / GEO3).